A 410-amino-acid polypeptide reads, in one-letter code: Tegument protein VP16 homolog (410 aa).

Residues 388–410 (PPSPSEILPGDPPRPPTCGFLTR) form a disordered region.

Belongs to the herpesviridae tegument protein VP16 protein family. Associates with the VP16-induced complex; binding to host HCFC1 activates VP16 for association with the octamer motif-binding host protein POU2F1, to form a multiprotein-DNA complex responsible for activating transcription of the viral immediate early genes.

Its subcellular location is the virion tegument. It localises to the host nucleus. Its function is as follows. Transcriptional activator of immediate-early (IE) gene products (alpha genes). Acts as a key activator of lytic infection by initiating the lytic program through the assembly of the transcriptional regulatory VP16-induced complex composed of VP16 and two cellular factors, HCFC1 and POU2F 1. VP16-induced complex represents a regulatory switch: when it is on, it promotes IE-gene expression and thus lytic infection, and when it is off, it limits IE-gene transcription favoring latent infection. Functionally, may play a role in the aggregation of tegument proteins around nucleocapsids during virus morphogenesis. The sequence is that of Tegument protein VP16 homolog from Varicella-zoster virus (strain Oka vaccine) (HHV-3).